Consider the following 205-residue polypeptide: Ribonuclease HII (205 aa).

Residues 14–205 enclose the RNase H type-2 domain; sequence ERICGIDEAG…SFKVRRLNEA (192 aa). Residues Asp20, Glu21, and Asp117 each contribute to the a divalent metal cation site.

Belongs to the RNase HII family. Mn(2+) serves as cofactor. It depends on Mg(2+) as a cofactor.

The protein resides in the cytoplasm. The enzyme catalyses Endonucleolytic cleavage to 5'-phosphomonoester.. Functionally, endonuclease that specifically degrades the RNA of RNA-DNA hybrids. This is Ribonuclease HII from Chlorobium phaeovibrioides (strain DSM 265 / 1930) (Prosthecochloris vibrioformis (strain DSM 265)).